A 127-amino-acid chain; its full sequence is Fatty acid-binding protein, liver (127 aa).

Residue methionine 1 is modified to N-acetylmethionine. Lysine 31 and lysine 36 each carry N6-succinyllysine. At serine 39 the chain carries Phosphoserine. Lysine 46 is modified (N6-succinyllysine). Serine 56 is modified (phosphoserine). 3 positions are modified to N6-succinyllysine: lysine 57, lysine 78, and lysine 90. Phosphoserine is present on serine 100. Residue asparagine 105 is modified to Deamidated asparagine; alternate. Residues 105 to 106 (NG) constitute a cross-link (isoaspartyl glycine isopeptide (Asn-Gly); alternate). At lysine 121 the chain carries N6-succinyllysine.

Belongs to the calycin superfamily. Fatty-acid binding protein (FABP) family. Monomer. Post-translationally, deamidation and transpeptidation at the beta carboxyl of Asn-105 forms an isoaspartyl residue and Edman degradation appears as though blocked. This rearrangement gives rise to an extra negative charge carried by the acid form.

The protein resides in the cytoplasm. Plays a role in lipoprotein-mediated cholesterol uptake in hepatocytes. Binds cholesterol. Binds free fatty acids and their coenzyme A derivatives, bilirubin, and some other small molecules in the cytoplasm. May be involved in intracellular lipid transport. This is Fatty acid-binding protein, liver (FABP1) from Bos taurus (Bovine).